The primary structure comprises 231 residues: Aspartate/glutamate leucyltransferase (231 aa).

The protein belongs to the R-transferase family. Bpt subfamily.

The protein localises to the cytoplasm. It catalyses the reaction N-terminal L-glutamyl-[protein] + L-leucyl-tRNA(Leu) = N-terminal L-leucyl-L-glutamyl-[protein] + tRNA(Leu) + H(+). The catalysed reaction is N-terminal L-aspartyl-[protein] + L-leucyl-tRNA(Leu) = N-terminal L-leucyl-L-aspartyl-[protein] + tRNA(Leu) + H(+). Functions in the N-end rule pathway of protein degradation where it conjugates Leu from its aminoacyl-tRNA to the N-termini of proteins containing an N-terminal aspartate or glutamate. The polypeptide is Aspartate/glutamate leucyltransferase (Pseudoalteromonas atlantica (strain T6c / ATCC BAA-1087)).